We begin with the raw amino-acid sequence, 700 residues long: Glycine--tRNA ligase beta subunit (700 aa).

The protein belongs to the class-II aminoacyl-tRNA synthetase family. Tetramer of two alpha and two beta subunits.

The protein resides in the cytoplasm. It catalyses the reaction tRNA(Gly) + glycine + ATP = glycyl-tRNA(Gly) + AMP + diphosphate. In Magnetococcus marinus (strain ATCC BAA-1437 / JCM 17883 / MC-1), this protein is Glycine--tRNA ligase beta subunit.